The primary structure comprises 56 residues: Large ribosomal subunit protein bL32 (56 aa).

Residues 1 to 34 (MAVQQNKKSRSKRGMRRSHDSLSTAQLSVDATSG) are disordered. The span at 7–16 (KKSRSKRGMR) shows a compositional bias: basic residues. Residues 21–31 (SLSTAQLSVDA) show a composition bias toward polar residues.

This sequence belongs to the bacterial ribosomal protein bL32 family.

The chain is Large ribosomal subunit protein bL32 from Shewanella frigidimarina (strain NCIMB 400).